The chain runs to 54 residues: Ovomucoid (54 aa).

Residues 4-54 (VDCSDYPKPACLLEYMPLCGSDNKTYDNKCSFCNAVVDSNGTLSLSHFGKC) form the Kazal-like domain. 3 disulfide bridges follow: Cys6/Cys36, Cys14/Cys33, and Cys22/Cys54. An N-linked (GlcNAc...) asparagine glycan is attached at Asn43.

It is found in the secreted. The sequence is that of Ovomucoid from Opisthocomus hoazin (Hoatzin).